Here is a 107-residue protein sequence, read N- to C-terminus: Protein KleE (107 aa).

The protein is Protein KleE (kleE) of Escherichia coli.